We begin with the raw amino-acid sequence, 156 residues long: Small ribosomal subunit protein uS7 (156 aa).

Belongs to the universal ribosomal protein uS7 family. Part of the 30S ribosomal subunit. Contacts proteins S9 and S11.

In terms of biological role, one of the primary rRNA binding proteins, it binds directly to 16S rRNA where it nucleates assembly of the head domain of the 30S subunit. Is located at the subunit interface close to the decoding center, probably blocks exit of the E-site tRNA. In Glaesserella parasuis serovar 5 (strain SH0165) (Haemophilus parasuis), this protein is Small ribosomal subunit protein uS7.